A 2979-amino-acid polypeptide reads, in one-letter code: Polyketide synthase-nonribosomal peptide synthetase TwmB (2979 aa).

Residues 5–435 (GAEIAIIGSG…GTNAHAILES (431 aa)) enclose the Ketosynthase family 3 (KS3) domain. Residues cysteine 176, histidine 315, and histidine 355 each act as for beta-ketoacyl synthase activity in the active site. The interval 549–864 (VFTGQGAQWA…PYTGLFTRGV (316 aa)) is malonyl-CoA:ACP transacylase (MAT) domain. Serine 643 serves as the catalytic For malonyltransferase activity. The interval 936-1070 (HDLLGHLTPN…GRVRIHLGEA (135 aa)) is N-terminal hotdog fold. Residues 936–1234 (HDLLGHLTPN…ECVPFSRQTA (299 aa)) are dehydratase (DH) domain. A PKS/mFAS DH domain is found at 936–1235 (HDLLGHLTPN…CVPFSRQTAK (300 aa)). Catalysis depends on histidine 968, which acts as the Proton acceptor; for dehydratase activity. The interval 1085–1235 (LVSVSEKKFY…CVPFSRQTAK (151 aa)) is C-terminal hotdog fold. Catalysis depends on aspartate 1141, which acts as the Proton donor; for dehydratase activity. The segment at 1387-1572 (NFTAHLAGIL…GIDTSTVEQP (186 aa)) is inactive methyltransferase (MT) domain. The interval 2098 to 2271 (TYWLVGLTGG…AASVMDIGAV (174 aa)) is ketoreductase (KR)domain. One can recognise a Carrier domain in the interval 2380-2465 (RNNEEAYGIV…ELVDTATEAI (86 aa)). The residue at position 2425 (serine 2425) is an O-(pantetheine 4'-phosphoryl)serine. The interval 2476–2497 (YPAEQTSSQNSDSGQDMASSFD) is disordered. Positions 2479–2497 (EQTSSQNSDSGQDMASSFD) are enriched in polar residues. The interval 2534 to 2970 (KSIPVSFTQA…MTLGQAALAE (437 aa)) is condensation.

As to quaternary structure, interacts with TwmE. Pantetheine 4'-phosphate serves as cofactor.

It carries out the reaction 5-aminopentanoate + 7 malonyl-CoA + acetyl-CoA + 11 NADPH + 17 H(+) = wortmanamide A + 7 CO2 + 11 NADP(+) + 8 CoA + 6 H2O. It catalyses the reaction 5-aminopentanoate + 8 malonyl-CoA + acetyl-CoA + 13 NADPH + 20 H(+) = wortmanamide B + 8 CO2 + 13 NADP(+) + 9 CoA + 7 H2O. The protein operates within secondary metabolite biosynthesis. Functionally, polyketide synthase-nonribosomal peptide synthetase; part of the gene cluster that mediates the biosynthesis of wortmanamides A and B, reduced long-chain polyketides amidated with a specific omega-amino acid, 5-aminopentanoic acid (5PA). The PKS modules of TwmB are involved in the synthesis of the polyketide backbone, whereas the non-canonical C domain of TwmB is a bonafide condensation domain that specifically selects 5PA and catalyzes amidation to release polyketide chain. The C domain clearly prefers C16 and C18 fatty acyl substrates, which is consistent with simultaneous formation of both octaketide and nonaketide acyl amides wortmanamides A and B. Because TwmB lacks a designated enoylreductase (ER) domain, the required activity is provided the enoyl reductase TwmE. The roles of the remaining enzymes have still to be clarified. The protein is Polyketide synthase-nonribosomal peptide synthetase TwmB of Talaromyces wortmannii (Penicillium wortmannii).